Reading from the N-terminus, the 152-residue chain is UPF0179 protein HQ_3004A (152 aa).

It belongs to the UPF0179 family.

This is UPF0179 protein HQ_3004A from Haloquadratum walsbyi (strain DSM 16790 / HBSQ001).